Reading from the N-terminus, the 235-residue chain is Small ribosomal subunit protein uS2c (235 aa).

Belongs to the universal ribosomal protein uS2 family.

Its subcellular location is the plastid. It is found in the chloroplast. The sequence is that of Small ribosomal subunit protein uS2c (rps2) from Adiantum capillus-veneris (Maidenhair fern).